We begin with the raw amino-acid sequence, 253 residues long: UPF0246 protein LBA1843 (253 aa).

This sequence belongs to the UPF0246 family.

This Lactobacillus acidophilus (strain ATCC 700396 / NCK56 / N2 / NCFM) protein is UPF0246 protein LBA1843.